The following is a 1085-amino-acid chain: Protein CROWDED NUCLEI 3 (1085 aa).

Coiled coils occupy residues 51–149 (DEAS…NDLK) and 185–695 (RERA…LDVL). Lys-318 participates in a covalent cross-link: Glycyl lysine isopeptide (Lys-Gly) (interchain with G-Cter in ubiquitin). The Nuclear localization signal signature appears at 404–411 (AKREAALE). A Glycyl lysine isopeptide (Lys-Gly) (interchain with G-Cter in ubiquitin) cross-link involves residue Lys-661. Phosphoserine occurs at positions 764, 787, 825, and 843. Disordered stretches follow at residues 801–997 (TVKL…GKAE) and 1020–1077 (NNTG…SIGK). The span at 813 to 825 (SLDRVSGEDHEPS) shows a compositional bias: basic and acidic residues. Residues 854-868 (RRGRGRGRGRGKSVR) are compositionally biased toward basic residues. The segment covering 877–897 (VSRDSKPSDGETPRKRQREQT) has biased composition (basic and acidic residues). Position 910 is a phosphoserine (Ser-910). A compositionally biased stretch (polar residues) spans 932 to 941 (VSQTPGQTRY). Over residues 949–995 (VGTEEDKAQASKGATEKQERVNDDIRKVPSPKETRTPPEGENRENGK) the composition is skewed to basic and acidic residues. A compositionally biased stretch (acidic residues) spans 1045–1066 (EEDDENISMIEEENEGEEEEET).

The protein belongs to the CRWN family. In terms of assembly, core component of the LINC complex which is composed of inner nuclear membrane SUN domain-containing proteins coupled to outer nuclear membrane WIP proteins, the nucleoskeletal CRWN/LINC proteins, and, possibly, KAKU4. Expressed at low levels in roots, leaves, flowers and flower stalks.

It is found in the nucleus membrane. The protein localises to the nucleus. The protein resides in the nucleoplasm. It localises to the cytoplasm. Its subcellular location is the nucleus lamina. Its function is as follows. Component of SUN-protein-containing multivariate complexes also called LINC complexes which link the nucleoskeleton and cytoskeleton by providing versatile outer nuclear membrane attachment sites for cytoskeletal filaments. Required for nucleus structure organization (e.g. size and shape). In Arabidopsis thaliana (Mouse-ear cress), this protein is Protein CROWDED NUCLEI 3.